Here is a 421-residue protein sequence, read N- to C-terminus: WD repeat and SOCS box-containing protein 1 (421 aa).

WD repeat units lie at residues 124–165 (SRCV…LLLN), 168–208 (DHIE…NMVK), 212–251 (AHQN…MIRK), 254–293 (GHHH…LLME), and 309–346 (ANDR…DCPV). One can recognise an SOCS box domain in the interval 372-421 (DGSVYFWATPRQVPSLQHICRMSIRRVMSTQEVQKLPVPSKILAFLSYRG).

As to quaternary structure, interacts with DIO2. Component of the probable ECS(WSB1) E3 ubiquitin-protein ligase complex which contains CUL5, RNF7/RBX2, Elongin BC complex and WSB1. Component of a probable ECS-like E3 ubiquitin-protein ligase complex which contains CUL5, RBX1, Elongin BC complex and WSB1. Interacts with CUL5, RNF7, ELOB and ELOC. Binds to HIPK2 through WD40 repeats.

The protein operates within protein modification; protein ubiquitination. In terms of biological role, probable substrate-recognition component of a SCF-like ECS (Elongin-Cullin-SOCS-box protein) E3 ubiquitin ligase complex which mediates the ubiquitination and subsequent proteasomal degradation of target proteins. Recognizes type II iodothyronine deiodinase/DIO2. Confers constitutive instability to HIPK2 through proteasomal degradation. The sequence is that of WD repeat and SOCS box-containing protein 1 (Wsb1) from Mus musculus (Mouse).